Here is a 275-residue protein sequence, read N- to C-terminus: Putative phosphoenolpyruvate synthase regulatory protein (275 aa).

Residue 153–160 (GVSRSGKT) coordinates ADP.

The protein belongs to the pyruvate, phosphate/water dikinase regulatory protein family. PSRP subfamily.

The catalysed reaction is [pyruvate, water dikinase] + ADP = [pyruvate, water dikinase]-phosphate + AMP + H(+). It catalyses the reaction [pyruvate, water dikinase]-phosphate + phosphate + H(+) = [pyruvate, water dikinase] + diphosphate. Bifunctional serine/threonine kinase and phosphorylase involved in the regulation of the phosphoenolpyruvate synthase (PEPS) by catalyzing its phosphorylation/dephosphorylation. This chain is Putative phosphoenolpyruvate synthase regulatory protein, found in Nitrosomonas eutropha (strain DSM 101675 / C91 / Nm57).